The following is a 206-amino-acid chain: Max dimerization protein 3 (206 aa).

The interval 8 to 25 (IQVLLQAAEFLERREREA) is interaction with SIN3A and SIN3B. Disordered regions lie at residues 29–66 (YASL…NELE) and 122–171 (KLRS…QEDL). A bHLH domain is found at 57–109 (SGRSVHNELEKRRRAQLKRCLEQLRQQMPLGVDCTRYTTLSLLRRARVHIQKL). A compositionally biased stretch (low complexity) spans 126 to 138 (KQQSLQQQLEQLQ). The span at 143–153 (ARERERLRADS) shows a compositional bias: basic and acidic residues.

In terms of assembly, efficient DNA binding requires dimerization with another bHLH protein. Binds DNA as a heterodimer with MAX. Interacts with SIN3A AND SIN3B. Interacts with RNF17. Expressed only in the proliferating areas of the testis and thymus.

It localises to the nucleus. Functionally, transcriptional repressor. Binds with MAX to form a sequence-specific DNA-binding protein complex which recognizes the core sequence 5'-CAC[GA]TG-3'. Antagonizes MYC transcriptional activity by competing for MAX and suppresses MYC dependent cell transformation. The polypeptide is Max dimerization protein 3 (Mxd3) (Mus musculus (Mouse)).